A 276-amino-acid chain; its full sequence is Undecaprenyl-diphosphatase (276 aa).

Transmembrane regions (helical) follow at residues 42 to 62, 88 to 108, 116 to 136, 149 to 169, 187 to 207, 222 to 242, and 253 to 273; these read AVTA…IVYF, ALLG…GYLG, LRSL…IVYA, MRLP…VPGV, VAAT…AGIF, SLVV…AWLL, and FVWY…TGLV.

This sequence belongs to the UppP family.

The protein resides in the cell membrane. The catalysed reaction is di-trans,octa-cis-undecaprenyl diphosphate + H2O = di-trans,octa-cis-undecaprenyl phosphate + phosphate + H(+). Its function is as follows. Catalyzes the dephosphorylation of undecaprenyl diphosphate (UPP). Confers resistance to bacitracin. This Acidothermus cellulolyticus (strain ATCC 43068 / DSM 8971 / 11B) protein is Undecaprenyl-diphosphatase.